Consider the following 472-residue polypeptide: Karilysin (472 aa).

The N-terminal stretch at 1–20 is a signal peptide; the sequence is MKRFILLFFLSTIAIFKVYS. A propeptide spans 21–34 (activation peptide); sequence QRLYDNGPLTGDNN. The Zn(2+) site is built by H102, D104, H117, H133, and H155. The active-site Proton donor/acceptor is E156. Positions 159 and 165 each coordinate Zn(2+). The propeptide at 196 to 386 is removed in short form; it reads YGYPFSISGP…AVSCSRTISP (191 aa). Positions 387–472 are cleaved as a propeptide — removed in long form; sequence FTLSPNPATD…QTYTQKLIKK (86 aa).

The protein belongs to the peptidase M10A family. Requires Zn(2+) as cofactor. Processes itself into the mature 18-kDa enzyme (Kly18) through sequential autoproteolytic cleavage at both the N- and C-termini. However, the maturation intermediate Kly38 is found to be more active than Kly18 and the rate for its processing is slow, which raises the question as to whether Kly38 is a physiologically relevant entity.

Its subcellular location is the secreted. With respect to regulation, autoprocessing and proteolytic activity are completely inhibited by EDTA and 1,10-phenanthroline in vitro. Proteolytic activity is 3-fold enhanced by Ca(2+) due to stabilization of the protein structure but inhibited by an excess of Zn(2+). Inhibitory studies of karilysin identified several phage display-selected peptides with apparent inhibition constants (Ki) in the micromolar range, among which is the tetrapeptide SWFP (Ki=10.7 uM). In terms of biological role, metalloprotease able to cleave casein, gelatin, elastin, fibrinogen and fibronectin. Shows exclusive preference for hydrophobic residues, especially Leu, Tyr and Met, at the P1' position of substrates, and for Pro or Ala at P3. Can efficiently cleave the antimicrobial peptide LL-37 which is a component of the immune system, leading to a significant reduction of its bactericidal activity. Is also able to inhibit all pathways of the human complement system. The classical and lectin complement pathways are inhibited because of the efficient degradation of mannose-binding lectin, ficolin-2, ficolin-3, and C4 by karilysin, whereas inhibition of the terminal pathway is caused by cleavage of C5. Thus, karilysin appears to be a major virulence factor of T.forsythia that contributes to evasion of the human immune response and periodontal disease. Seems to act synergistically with gingipains from the periodontal pathogen P.gingivalis present at the same sites of infection. The chain is Karilysin (kly) from Tannerella forsythia (strain ATCC 43037 / JCM 10827 / CCUG 21028 A / KCTC 5666 / FDC 338) (Bacteroides forsythus).